Consider the following 334-residue polypeptide: Large ribosomal subunit protein uL3 (334 aa).

A compositionally biased stretch (basic residues) spans M1–R10. A disordered region spans residues M1–A21.

Belongs to the universal ribosomal protein uL3 family. Part of the 50S ribosomal subunit. Forms a cluster with proteins L14 and L24e.

Functionally, one of the primary rRNA binding proteins, it binds directly near the 3'-end of the 23S rRNA, where it nucleates assembly of the 50S subunit. In Methanococcus vannielii (strain ATCC 35089 / DSM 1224 / JCM 13029 / OCM 148 / SB), this protein is Large ribosomal subunit protein uL3.